The chain runs to 112 residues: UPF0342 protein SUB0718 (112 aa).

It belongs to the UPF0342 family.

The sequence is that of UPF0342 protein SUB0718 from Streptococcus uberis (strain ATCC BAA-854 / 0140J).